Here is a 438-residue protein sequence, read N- to C-terminus: sn-glycerol-3-phosphate-binding periplasmic protein UgpB (438 aa).

A signal peptide spans 1–23 (MKPLHYTASALALGLALMGNAQA). Residues Y65, E89, S144, S270, G307, Y346, and R397 each coordinate sn-glycerol 3-phosphate.

This sequence belongs to the bacterial solute-binding protein 1 family. As to quaternary structure, the complex is composed of two ATP-binding proteins (UgpC), two transmembrane proteins (UgpA and UgpE) and a solute-binding protein (UgpB).

It is found in the periplasm. Its function is as follows. Part of the ABC transporter complex UgpBAEC involved in sn-glycerol-3-phosphate (G3P) import. Binds G3P. This Shigella flexneri protein is sn-glycerol-3-phosphate-binding periplasmic protein UgpB (ugpB).